Here is a 112-residue protein sequence, read N- to C-terminus: Abdominal ganglion neuropeptides L5-67 (112 aa).

The first 23 residues, M1–S23, serve as a signal peptide directing secretion. Position 33 is a phenylalanine amide (F33).

Post-translationally, the prohormone is proteolytically cleaved in 2 steps, yielding first 2 products: luqin and PRMP. In the second step, PRMP is cleaved to yield luqin-B and luqin-C. Neurons L2-4 and L6, also called giant dorsal LUQ (Left Upper Quadrant) neurons of the abdominal ganglion. Also expressed in smaller neurons in the CNS and in peripheral organs such as the kidney.

It localises to the secreted. This Aplysia californica (California sea hare) protein is Abdominal ganglion neuropeptides L5-67.